The sequence spans 224 residues: 7-cyano-7-deazaguanine synthase (224 aa).

10–20 (VSGGLDSATVL) serves as a coordination point for ATP. Zn(2+) contacts are provided by Cys-189, Cys-199, Cys-202, and Cys-205.

This sequence belongs to the QueC family. Requires Zn(2+) as cofactor.

The enzyme catalyses 7-carboxy-7-deazaguanine + NH4(+) + ATP = 7-cyano-7-deazaguanine + ADP + phosphate + H2O + H(+). It functions in the pathway purine metabolism; 7-cyano-7-deazaguanine biosynthesis. Its function is as follows. Catalyzes the ATP-dependent conversion of 7-carboxy-7-deazaguanine (CDG) to 7-cyano-7-deazaguanine (preQ(0)). This chain is 7-cyano-7-deazaguanine synthase, found in Nitrosococcus oceani (strain ATCC 19707 / BCRC 17464 / JCM 30415 / NCIMB 11848 / C-107).